The following is a 296-amino-acid chain: Phosphatidylglycerol--prolipoprotein diacylglyceryl transferase (296 aa).

Residues 1-21 (MRHRRRPGGRSTAGGTPVSQL) are disordered. A run of 7 helical transmembrane segments spans residues 34-54 (GPLTIHIYALCILAGIVVAYI), 72-92 (ELCALAVIAGIIGGRLYHVIT), 108-128 (FFIWQGGLGIWGAISLGGLAI), 136-158 (GIRFASVADSLAPGILAAQAIGR), 195-215 (FHPTFLYELVWSLVGAVFLLW), 227-243 (LFTLYVAIYTFGRFWVE), and 258-278 (LNDVTALVVFTGAVVILIVLQ). Arg158 lines the a 1,2-diacyl-sn-glycero-3-phospho-(1'-sn-glycerol) pocket.

The protein belongs to the Lgt family.

It localises to the cell membrane. The catalysed reaction is L-cysteinyl-[prolipoprotein] + a 1,2-diacyl-sn-glycero-3-phospho-(1'-sn-glycerol) = an S-1,2-diacyl-sn-glyceryl-L-cysteinyl-[prolipoprotein] + sn-glycerol 1-phosphate + H(+). It participates in protein modification; lipoprotein biosynthesis (diacylglyceryl transfer). Its function is as follows. Catalyzes the transfer of the diacylglyceryl group from phosphatidylglycerol to the sulfhydryl group of the N-terminal cysteine of a prolipoprotein, the first step in the formation of mature lipoproteins. The chain is Phosphatidylglycerol--prolipoprotein diacylglyceryl transferase from Cutibacterium acnes (strain DSM 16379 / KPA171202) (Propionibacterium acnes).